Here is a 465-residue protein sequence, read N- to C-terminus: Chromosomal replication initiator protein DnaA (465 aa).

The domain I, interacts with DnaA modulators stretch occupies residues 1-72; the sequence is MRTKQLWQVA…ETLSLLLGRP (72 aa). The interval 72–117 is domain II; sequence PIAVHFTVHGQDDEEHPVQRRPQRRALASEEGSASKQLSLTPSPEH. Positions 80 to 118 are disordered; it reads HGQDDEEHPVQRRPQRRALASEEGSASKQLSLTPSPEHG. Residues 103 to 113 are compositionally biased toward polar residues; that stretch reads GSASKQLSLTP. Residues 118-334 are domain III, AAA+ region; that stretch reads GLNPRYTFEK…GALNRIVALA (217 aa). Positions 162, 164, 165, and 166 each coordinate ATP. A domain IV, binds dsDNA region spans residues 335-465; the sequence is QLTHQPITLA…DAKAPLASRH (131 aa).

Belongs to the DnaA family. As to quaternary structure, oligomerizes as a right-handed, spiral filament on DNA at oriC.

It localises to the cytoplasm. Its function is as follows. Plays an essential role in the initiation and regulation of chromosomal replication. ATP-DnaA binds to the origin of replication (oriC) to initiate formation of the DNA replication initiation complex once per cell cycle. Binds the DnaA box (a 9 base pair repeat at the origin) and separates the double-stranded (ds)DNA. Forms a right-handed helical filament on oriC DNA; dsDNA binds to the exterior of the filament while single-stranded (ss)DNA is stabiized in the filament's interior. The ATP-DnaA-oriC complex binds and stabilizes one strand of the AT-rich DNA unwinding element (DUE), permitting loading of DNA polymerase. After initiation quickly degrades to an ADP-DnaA complex that is not apt for DNA replication. Binds acidic phospholipids. The protein is Chromosomal replication initiator protein DnaA of Thermomicrobium roseum (strain ATCC 27502 / DSM 5159 / P-2).